Consider the following 106-residue polypeptide: Gibberellin-regulated protein 4 (106 aa).

Positions 1-25 (MAKSYGAIFLLTLIVLFMLQTMVMA) are cleaved as a signal peptide.

The protein belongs to the GASA family. Post-translationally, six disulfide bonds may be present. As to expression, expressed in flower buds, style, stamen filaments, vasculature of petals, root phloem, vasculature of cotyledons and rosette leaves and developing embryo.

It is found in the secreted. In terms of biological role, gibberellin-regulated protein involved in the regulation of floral meristem and floral organ identity, and promotion of seed size and weight. May play a role in the promotion of gibberellin responses such as regulation of flowering under short-day conditions, seed germination and inhibition of gibberellin oxidase. Possesses redox activity in E.coli and may function in redox regulation in planta. This is Gibberellin-regulated protein 4 (GASA4) from Arabidopsis thaliana (Mouse-ear cress).